We begin with the raw amino-acid sequence, 62 residues long: uncharacterized protein (62 aa).

Positions 1–62 (MSSTAEEMAA…SNGEAKRKEK (62 aa)) are disordered. Residues 28-37 (TKSDRVEHKH) are compositionally biased toward basic and acidic residues.

This is an uncharacterized protein from Caenorhabditis elegans.